The chain runs to 247 residues: Phycocyanobilin:ferredoxin oxidoreductase (247 aa).

Belongs to the HY2 family.

It catalyses the reaction (2R,3Z)-phycocyanobilin + 4 oxidized [2Fe-2S]-[ferredoxin] = biliverdin IXalpha + 4 reduced [2Fe-2S]-[ferredoxin] + 4 H(+). Catalyzes the four-electron reduction of biliverdin IX-alpha (2-electron reduction at both the A and D rings); the reaction proceeds via an isolatable 2-electron intermediate, 181,182-dihydrobiliverdin. This is Phycocyanobilin:ferredoxin oxidoreductase from Synechococcus sp. (strain CC9605).